The sequence spans 398 residues: 8-amino-7-oxononanoate synthase (398 aa).

Substrate is bound at residue arginine 26. 113 to 114 (GF) serves as a coordination point for pyridoxal 5'-phosphate. Histidine 138 provides a ligand contact to substrate. Positions 181, 209, and 238 each coordinate pyridoxal 5'-phosphate. Residue lysine 241 is modified to N6-(pyridoxal phosphate)lysine. A substrate-binding site is contributed by threonine 355.

It belongs to the class-II pyridoxal-phosphate-dependent aminotransferase family. BioF subfamily. In terms of assembly, homodimer. The cofactor is pyridoxal 5'-phosphate.

The catalysed reaction is 6-carboxyhexanoyl-[ACP] + L-alanine + H(+) = (8S)-8-amino-7-oxononanoate + holo-[ACP] + CO2. It participates in cofactor biosynthesis; biotin biosynthesis. Its function is as follows. Catalyzes the decarboxylative condensation of pimeloyl-[acyl-carrier protein] and L-alanine to produce 8-amino-7-oxononanoate (AON), [acyl-carrier protein], and carbon dioxide. The polypeptide is 8-amino-7-oxononanoate synthase (Aeromonas hydrophila subsp. hydrophila (strain ATCC 7966 / DSM 30187 / BCRC 13018 / CCUG 14551 / JCM 1027 / KCTC 2358 / NCIMB 9240 / NCTC 8049)).